The sequence spans 432 residues: Glutamate-1-semialdehyde 2,1-aminomutase (432 aa).

Lysine 272 carries the post-translational modification N6-(pyridoxal phosphate)lysine.

The protein belongs to the class-III pyridoxal-phosphate-dependent aminotransferase family. HemL subfamily. Homodimer. The cofactor is pyridoxal 5'-phosphate.

The protein localises to the cytoplasm. The catalysed reaction is (S)-4-amino-5-oxopentanoate = 5-aminolevulinate. Its pathway is porphyrin-containing compound metabolism; protoporphyrin-IX biosynthesis; 5-aminolevulinate from L-glutamyl-tRNA(Glu): step 2/2. It participates in porphyrin-containing compound metabolism; chlorophyll biosynthesis. The chain is Glutamate-1-semialdehyde 2,1-aminomutase from Picosynechococcus sp. (strain ATCC 27264 / PCC 7002 / PR-6) (Agmenellum quadruplicatum).